A 199-amino-acid polypeptide reads, in one-letter code: Protein-methionine-sulfoxide reductase heme-binding subunit MsrQ (199 aa).

5 helical membrane passes run 13–33, 79–99, 120–140, 147–167, and 169–189; these read VLLH…VDQG, LLGL…ALLE, LGII…QIMM, WQKL…HYLW, and VKTL…LLLL.

This sequence belongs to the MsrQ family. In terms of assembly, heterodimer of a catalytic subunit (MsrP) and a heme-binding subunit (MsrQ). FMN serves as cofactor. It depends on heme b as a cofactor.

Its subcellular location is the cell inner membrane. Part of the MsrPQ system that repairs oxidized periplasmic proteins containing methionine sulfoxide residues (Met-O), using respiratory chain electrons. Thus protects these proteins from oxidative-stress damage caused by reactive species of oxygen and chlorine generated by the host defense mechanisms. MsrPQ is essential for the maintenance of envelope integrity under bleach stress, rescuing a wide series of structurally unrelated periplasmic proteins from methionine oxidation. MsrQ provides electrons for reduction to the reductase catalytic subunit MsrP, using the quinone pool of the respiratory chain. The polypeptide is Protein-methionine-sulfoxide reductase heme-binding subunit MsrQ (Pectobacterium atrosepticum (strain SCRI 1043 / ATCC BAA-672) (Erwinia carotovora subsp. atroseptica)).